The primary structure comprises 340 residues: DNA-directed RNA polymerase subunit alpha (340 aa).

Positions 1 to 233 are alpha N-terminal domain (alpha-NTD); it reads MVREEVAVST…DLFIPFLHAE (233 aa). The tract at residues 266-340 is alpha C-terminal domain (alpha-CTD); that stretch reads KKEIALKCIF…GIDLPKNKRF (75 aa).

It belongs to the RNA polymerase alpha chain family. As to quaternary structure, in plastids the minimal PEP RNA polymerase catalytic core is composed of four subunits: alpha, beta, beta', and beta''. When a (nuclear-encoded) sigma factor is associated with the core the holoenzyme is formed, which can initiate transcription.

It is found in the plastid. The protein resides in the chloroplast. It catalyses the reaction RNA(n) + a ribonucleoside 5'-triphosphate = RNA(n+1) + diphosphate. DNA-dependent RNA polymerase catalyzes the transcription of DNA into RNA using the four ribonucleoside triphosphates as substrates. The sequence is that of DNA-directed RNA polymerase subunit alpha from Calycanthus floridus var. glaucus (Eastern sweetshrub).